Here is a 438-residue protein sequence, read N- to C-terminus: MLKAVILIGGPQKGTRFRPLSLDTPKPLFPLAGRPLIAHHIEACAQLPDIREILIIGYYPQTQMEGFVGDMQALYSSSNINIRYLQEFTALGTAGGMYHFRDQIRAGNPRAFFVLNGDVCADFPLQELCDFHEKRPASALVTIMSTEATRQQSLHYGCLVFDRSSGAVSHYVEKPSSYVSTFINCGVYVCSMDIFTVLAQIFHSRGQEYSCQAFCNGNGNGNGREQGHIKWEQEVLTPLAGTDKLFAMPVPNWWSQLKTAGSAIYANRHYLGLYKKTHPERLANVGIKRGEGDGSLICTVHPDVYVHPSATVHHSAVLGPNVAIGPGVTIGPGVRIRESIVLEQAQILDHTLVLHSIVGRGSTIGAWARVEGTPSDPDPNKPFAKMENPPLFNNEGKLNPSITILGCFVQVPAEKILLNSIVLPHKELSRSFKNEIIL.

The segment at 2 to 260 (LKAVILIGGP…PNWWSQLKTA (259 aa)) is substrate-binding domain. GDP-alpha-D-mannose-binding residues include E87 and Q256. The interval 282 to 438 (LANVGIKRGE…SRSFKNEIIL (157 aa)) is hexapeptide repeat domain. The interval 373 to 402 (TPSDPDPNKPFAKMENPPLFNNEGKLNPSI) is C-loop.

Belongs to the transferase hexapeptide repeat family. As to quaternary structure, component of the GMPPA-GMPPB mannose-1-phosphate guanylyltransferase complex composed of 4 GMPPA subunits and 8 GMPPB subunits; the complex is organized into three layers, a central layer made up of 2 GMPPA dimers sandwiched between two layers each made up of 2 GMPPB dimers.

Regulatory subunit of the GMPPA-GMPPB mannose-1-phosphate guanylyltransferase complex; reduces the catalytic activity of GMPPB when part of the complex. Mediates allosteric feedback inhibition of GMPPB catalytic activity upon binding GDP-alpha-D-mannose. Together with GMPPB regulates GDP-alpha-D-mannose levels. This is Mannose-1-phosphate guanylyltransferase regulatory subunit alpha from Drosophila melanogaster (Fruit fly).